Reading from the N-terminus, the 490-residue chain is Betaine aldehyde dehydrogenase (490 aa).

K(+) contacts are provided by T26 and D93. Residue 150–152 (GAW) coordinates NAD(+). The active-site Charge relay system is K162. An NAD(+)-binding site is contributed by 176–179 (KPSE). V180 lines the K(+) pocket. Residue 230–233 (GVAT) participates in NAD(+) binding. Position 246 (L246) interacts with K(+). The active-site Proton acceptor is the E252. NAD(+) contacts are provided by G254, C286, and E387. C286 functions as the Nucleophile in the catalytic mechanism. A Cysteine sulfenic acid (-SOH) modification is found at C286. K(+) contacts are provided by K457 and G460. Catalysis depends on E464, which acts as the Charge relay system.

The protein belongs to the aldehyde dehydrogenase family. As to quaternary structure, dimer of dimers. Requires K(+) as cofactor.

The catalysed reaction is betaine aldehyde + NAD(+) + H2O = glycine betaine + NADH + 2 H(+). The protein operates within amine and polyamine biosynthesis; betaine biosynthesis via choline pathway; betaine from betaine aldehyde: step 1/1. Its function is as follows. Involved in the biosynthesis of the osmoprotectant glycine betaine. Catalyzes the irreversible oxidation of betaine aldehyde to the corresponding acid. The protein is Betaine aldehyde dehydrogenase of Stenotrophomonas maltophilia (strain R551-3).